Here is a 209-residue protein sequence, read N- to C-terminus: Yop proteins translocation protein K (209 aa).

Belongs to an operon involved in the translocation of Yop proteins across the bacterial membranes or in the specific control of this function. This Yersinia enterocolitica protein is Yop proteins translocation protein K (yscK).